The primary structure comprises 149 residues: Nucleoside diphosphate kinase 1 (149 aa).

The ATP site is built by Lys10, Phe58, Arg86, Thr92, Arg103, and Asn113. The Pros-phosphohistidine intermediate role is filled by His116.

This sequence belongs to the NDK family. It depends on Mg(2+) as a cofactor.

The catalysed reaction is a 2'-deoxyribonucleoside 5'-diphosphate + ATP = a 2'-deoxyribonucleoside 5'-triphosphate + ADP. The enzyme catalyses a ribonucleoside 5'-diphosphate + ATP = a ribonucleoside 5'-triphosphate + ADP. Major role in the synthesis of nucleoside triphosphates other than ATP. The ATP gamma phosphate is transferred to the NDP beta phosphate via a ping-pong mechanism, using a phosphorylated active-site intermediate. This NDK is microtubule-associated. This chain is Nucleoside diphosphate kinase 1 (NDPK1), found in Pisum sativum (Garden pea).